Consider the following 803-residue polypeptide: Myb-like protein V (803 aa).

Disordered regions lie at residues 237-333 and 429-803; these read SNIY…LPGL and KSTS…SRRK. Residues 258–323 adopt a coiled-coil conformation; sequence DANDKNENNN…ENNKNKRTKS (66 aa). Acidic residues predominate over residues 271–294; sequence DDADDAAADDADDADDDDMDDESD. Residues 295–315 show a composition bias toward low complexity; the sequence is SNNNNKNSNNKNSNNKNSNEN. Residues 332-379 enclose the Myb-like domain; sequence GLWTDEECRSLIKAVMIIGHRWIKIKEDYYSTSKRKPSQLKDKMRSLR. Coiled-coil stretches lie at residues 400-429 and 463-496; these read EIEKLAVLFQQKEEAQKLAKEKIDSLSNIK and NNEDNQNESESENEDENDNNEKEKEKRNKKNSAV. Over residues 429 to 438 the composition is skewed to polar residues; that stretch reads KSTSNTSAAS. 2 stretches are compositionally biased toward acidic residues: residues 448-480 and 510-533; these read NDSDEEVDQDSDNDSNNEDNQNESESENEDEND and EEEESDEEHNDSEEDSQEDSEENE. Composition is skewed to basic residues over residues 537–553 and 568–577; these read KQKRKSNQIKSSPKKLK and HKSKLKSKPQ. The stretch at 573-616 forms a coiled coil; sequence KSKPQRKVEKEESEKEESEEEESEEEEEEDDEDYESEEDKKKKK. Over residues 586-609 the composition is skewed to acidic residues; sequence EKEESEEEESEEEEEEDDEDYESE. Composition is skewed to low complexity over residues 625–636 and 666–733; these read TSTHTTTTTTTT and KKSN…PTKK. The span at 786-795 shows a compositional bias: basic and acidic residues; sequence LNKDSKENKK.

The sequence is that of Myb-like protein V (mybV) from Dictyostelium discoideum (Social amoeba).